Reading from the N-terminus, the 365-residue chain is 2-aminoethylphosphonate--pyruvate transaminase (365 aa).

At lysine 194 the chain carries N6-(pyridoxal phosphate)lysine.

It belongs to the class-V pyridoxal-phosphate-dependent aminotransferase family. PhnW subfamily. Homodimer. Pyridoxal 5'-phosphate serves as cofactor.

The catalysed reaction is (2-aminoethyl)phosphonate + pyruvate = phosphonoacetaldehyde + L-alanine. Functionally, involved in phosphonate degradation. The polypeptide is 2-aminoethylphosphonate--pyruvate transaminase (Bacillus cytotoxicus (strain DSM 22905 / CIP 110041 / 391-98 / NVH 391-98)).